The sequence spans 131 residues: Profilin-5 (131 aa).

The protein belongs to the profilin family. Occurs in many kinds of cells as a complex with monomeric actin in a 1:1 ratio.

The protein localises to the cytoplasm. Its subcellular location is the cytoskeleton. Its function is as follows. Binds to actin and affects the structure of the cytoskeleton. At high concentrations, profilin prevents the polymerization of actin, whereas it enhances it at low concentrations. By binding to PIP2, it inhibits the formation of IP3 and DG. The protein is Profilin-5 of Hevea brasiliensis (Para rubber tree).